The chain runs to 115 residues: Mobilization protein MbeC (115 aa).

The protein to E.coli MbaC and MbkC. In terms of assembly, homodimer. Interacts with MbeA and MbeB to form the relaxosome.

In terms of biological role, required for efficient mobilization of ColE1 plasmid and is thus essential to promote the specific transfer of the plasmid during conjugation. Probably functions by inducing DNA bending, helping the MbeA relaxase to melt the DNA around the nic site and cleave the phosphodiester bond. Binds specifically double-stranded DNA (dsDNA) containing the ColE1 oriT but does not recognize the inverted repeat (IR). The sequence is that of Mobilization protein MbeC (mbeC) from Escherichia coli.